Consider the following 1188-residue polypeptide: Probable phosphoenolpyruvate synthase (1188 aa).

A DOD-type homing endonuclease domain is found at Leu536–Ile670. His824 (tele-phosphohistidine intermediate) is an active-site residue. Arg917, Arg964, Glu1061, Gly1083, Thr1084, Asn1085, and Asp1086 together coordinate substrate. Mg(2+) is bound at residue Glu1061. Residue Asp1086 coordinates Mg(2+). The active-site Proton donor is the Cys1133.

This sequence belongs to the PEP-utilizing enzyme family. Mg(2+) is required as a cofactor. Post-translationally, this protein undergoes a protein self splicing that involves a post-translational excision of the intervening region (intein) followed by peptide ligation.

The enzyme catalyses pyruvate + ATP + H2O = phosphoenolpyruvate + AMP + phosphate + 2 H(+). It participates in carbohydrate biosynthesis; gluconeogenesis. Functionally, catalyzes the phosphorylation of pyruvate to phosphoenolpyruvate. The sequence is that of Probable phosphoenolpyruvate synthase (ppsA) from Methanocaldococcus jannaschii (strain ATCC 43067 / DSM 2661 / JAL-1 / JCM 10045 / NBRC 100440) (Methanococcus jannaschii).